A 332-amino-acid polypeptide reads, in one-letter code: Caffeoylshikimate esterase (332 aa).

Over residues 1–13 (MPSEAESSANSAP) the composition is skewed to low complexity. Positions 1 to 26 (MPSEAESSANSAPATPPPPPNFWGTM) are disordered. Residue Ser147 is the Nucleophile of the active site. Catalysis depends on charge relay system residues Asp268 and His298.

This sequence belongs to the AB hydrolase superfamily. Monoacylglycerol lipase family. As to quaternary structure, interacts with ACBP2. In terms of tissue distribution, expressed in vasculature of roots and leaves, stems, flowers and siliques.

Its subcellular location is the cell membrane. The enzyme catalyses 5-O-[(E)-caffeoyl]-shikimate + H2O = shikimate + (E)-caffeate + H(+). In terms of biological role, esterase involved in the biosynthesis of lignin. Hydrolyzes caffeoylshikimate into caffeate and shikimate. Together with 4-coumarate--CoA ligase (4CL), acts on an alternative reaction for the formation of caffeoyl-CoA and bypasses the second reaction of shikimate O-hydroxycinnamoyltransferase (HST). Also accepts 4-coumaroylshikimate as substrate, but with lower activity. According to PubMed:20345607 and PubMed:22915575, possesses monoacylglycerol O-acyltransferase, monoacylglycerol lipase and lysophospholipase activities in vitro. With the association of ACBP2, may promote the degradation of lysophosphatidylcholine and detoxify the peroxidized membrane in response to cadmium-induced oxidative stress. However these results require additional confirmation in vivo. This is Caffeoylshikimate esterase (CSE) from Arabidopsis thaliana (Mouse-ear cress).